Reading from the N-terminus, the 490-residue chain is MPFTLAIVGRPNVGKSTLFNRLVGKRLALVDDQPGVTRDLREGAARLGDLRFTVIDTAGLEEATDDSLQGRMRRLTERAVSMADACLFLIDARVGVTPTDEVFADILRRSNAHVLLGANKAEGRAAEAGLIEAYALGLGEPLALSAEHGEGMAELTGALMPLIDAFEETENAETEDAPETDVALDPDAEEETVVRVPTKAKPLQVAVVGRPNAGKSTLINQLLGEDRLLTGPEAGITRDAISLAMDWDGLPVRIFDTAGMRKKAKVQEKLEKLSVSDGLRAVKFAEVVVVLLDAGIPFEQQDLRIADLAEREGRAVVIAVNKWDMEDDKQGKLKELKEAFERLLPQLRGAPLVTVSAKTGRGMDRLRDAVLRAHEVWNRRVPTAALNRWLGAMVEAHPPPAPGGRRIKLRYMTQAKTRPPGFVVMCSYPEKIPESYTRYLVNGLREDFDMPGTPIRLTMRSQSDANPYKNRKKSTPSRLRKHLGKPSLKG.

EngA-type G domains are found at residues 3–167 (FTLA…DAFE) and 203–378 (LQVA…EVWN). GTP contacts are provided by residues 9 to 16 (GRPNVGKS), 56 to 60 (DTAGL), 119 to 122 (NKAE), 209 to 216 (GRPNAGKS), 256 to 260 (DTAGM), and 321 to 324 (NKWD). In terms of domain architecture, KH-like spans 379 to 465 (RRVPTAALNR…RLTMRSQSDA (87 aa)). Positions 451–490 (PGTPIRLTMRSQSDANPYKNRKKSTPSRLRKHLGKPSLKG) are disordered. The span at 469–484 (KNRKKSTPSRLRKHLG) shows a compositional bias: basic residues.

This sequence belongs to the TRAFAC class TrmE-Era-EngA-EngB-Septin-like GTPase superfamily. EngA (Der) GTPase family. As to quaternary structure, associates with the 50S ribosomal subunit.

Functionally, GTPase that plays an essential role in the late steps of ribosome biogenesis. The sequence is that of GTPase Der from Dinoroseobacter shibae (strain DSM 16493 / NCIMB 14021 / DFL 12).